The chain runs to 167 residues: uncharacterized protein (167 aa).

The segment covering 1–13 has biased composition (basic and acidic residues); sequence MQGDIRRKKDLLP. 2 disordered regions span residues 1–26 and 67–167; these read MQGD…SRRR and ESHS…ILDN. Low complexity predominate over residues 71-80; that stretch reads SDVSASASDH. Over residues 102-156 the composition is skewed to basic and acidic residues; sequence VPKEKFNNEVAKQQEVKNLENDLKPQIDSEKQKQINKDKKEQKQQLQKEKQDLAK.

This is an uncharacterized protein from Saccharomyces cerevisiae (strain ATCC 204508 / S288c) (Baker's yeast).